We begin with the raw amino-acid sequence, 425 residues long: Riboflavin biosynthesis protein RibBA (425 aa).

The DHBP synthase stretch occupies residues Met1–Lys204. Residues Arg28–Glu29, Asp33, Arg141–Thr145, and Glu165 contribute to the D-ribulose 5-phosphate site. Glu29 is a Mg(2+) binding site. A Mg(2+)-binding site is contributed by His144. Positions His205–Leu425 are GTP cyclohydrolase II. Arg259–Glu263 is a binding site for GTP. Cys264, Cys275, and Cys277 together coordinate Zn(2+). GTP is bound by residues Gln280, Glu303–Arg305, and Thr325. Asp337 functions as the Proton acceptor; for GTP cyclohydrolase activity in the catalytic mechanism. The Nucleophile; for GTP cyclohydrolase activity role is filled by Arg339. Residues Thr360 and Lys365 each contribute to the GTP site.

It in the N-terminal section; belongs to the DHBP synthase family. This sequence in the C-terminal section; belongs to the GTP cyclohydrolase II family. The cofactor is Mg(2+). It depends on Mn(2+) as a cofactor. Requires Zn(2+) as cofactor.

It carries out the reaction D-ribulose 5-phosphate = (2S)-2-hydroxy-3-oxobutyl phosphate + formate + H(+). The catalysed reaction is GTP + 4 H2O = 2,5-diamino-6-hydroxy-4-(5-phosphoribosylamino)-pyrimidine + formate + 2 phosphate + 3 H(+). The protein operates within cofactor biosynthesis; riboflavin biosynthesis; 2-hydroxy-3-oxobutyl phosphate from D-ribulose 5-phosphate: step 1/1. It functions in the pathway cofactor biosynthesis; riboflavin biosynthesis; 5-amino-6-(D-ribitylamino)uracil from GTP: step 1/4. Its function is as follows. Catalyzes the conversion of D-ribulose 5-phosphate to formate and 3,4-dihydroxy-2-butanone 4-phosphate. Catalyzes the conversion of GTP to 2,5-diamino-6-ribosylamino-4(3H)-pyrimidinone 5'-phosphate (DARP), formate and pyrophosphate. The chain is Riboflavin biosynthesis protein RibBA from Mycobacterium avium (strain 104).